The primary structure comprises 399 residues: MHTWALLLAAGQSSRIAAACPGVRKQFLLWQNAPLFWHSAVMLSRVSRMRGIIFVFPEDMLEEATAMVRELDAGRALGIPWKAVSGGARRQDSVASGLGQLPAECDTVLVHDAARPFASASLTNSILDALQAGAEGVVPALAVTDTIKVVEDGAVLSTPDRTKLVAVQTPQGFSLQALLGAHRHCAEKALAVTDDASMLELLGQHTVITVEGEASNIKVTHPEDLTMLHSSEKKNMQVPCVGWGYDVHRFGSDGRPMKLGGVPIAGGPGVIAHSDGDVLLHALTDAVLGCMGLGDIGMLFPDTDAAYDNADSAVMLNEVLEKARNAGLLITHVDLTIITQIPRITPWRDQIHKNICRITRLDASSVNLKATTEEKLGFTGEKKGIKAVAAVTALRRVSS.

The interval 1–239 (MHTWALLLAA…SSEKKNMQVP (239 aa)) is 2-C-methyl-D-erythritol 4-phosphate cytidylyltransferase. Residues 240–399 (CVGWGYDVHR…AVTALRRVSS (160 aa)) form a 2-C-methyl-D-erythritol 2,4-cyclodiphosphate synthase region. The a divalent metal cation site is built by D246 and H248. Residues 246 to 248 (DVH) and 273 to 274 (HS) contribute to the 4-CDP-2-C-methyl-D-erythritol 2-phosphate site. Position 281 (H281) interacts with a divalent metal cation. 4-CDP-2-C-methyl-D-erythritol 2-phosphate-binding positions include 295-297 (DIG), 300-304 (FPDTD), 371-374 (TTEE), and F378.

This sequence in the N-terminal section; belongs to the IspD/TarI cytidylyltransferase family. IspD subfamily. The protein in the C-terminal section; belongs to the IspF family. It depends on a divalent metal cation as a cofactor.

It carries out the reaction 2-C-methyl-D-erythritol 4-phosphate + CTP + H(+) = 4-CDP-2-C-methyl-D-erythritol + diphosphate. The enzyme catalyses 4-CDP-2-C-methyl-D-erythritol 2-phosphate = 2-C-methyl-D-erythritol 2,4-cyclic diphosphate + CMP. It participates in isoprenoid biosynthesis; isopentenyl diphosphate biosynthesis via DXP pathway; isopentenyl diphosphate from 1-deoxy-D-xylulose 5-phosphate: step 2/6. The protein operates within isoprenoid biosynthesis; isopentenyl diphosphate biosynthesis via DXP pathway; isopentenyl diphosphate from 1-deoxy-D-xylulose 5-phosphate: step 4/6. Its function is as follows. Bifunctional enzyme that catalyzes the formation of 4-diphosphocytidyl-2-C-methyl-D-erythritol from CTP and 2-C-methyl-D-erythritol 4-phosphate (MEP) (IspD), and catalyzes the conversion of 4-diphosphocytidyl-2-C-methyl-D-erythritol 2-phosphate (CDP-ME2P) to 2-C-methyl-D-erythritol 2,4-cyclodiphosphate (ME-CPP) with a corresponding release of cytidine 5-monophosphate (CMP) (IspF). This is Bifunctional enzyme IspD/IspF from Oleidesulfovibrio alaskensis (strain ATCC BAA-1058 / DSM 17464 / G20) (Desulfovibrio alaskensis).